A 520-amino-acid polypeptide reads, in one-letter code: Protein EARLY FLOWERING 5 (520 aa).

Short sequence motifs (nuclear localization signal) lie at residues 16-23 (YRKQIRKR), 52-59 (IRKLDMSK), and 71-78 (KKRQLEDT). The disordered stretch occupies residues 83-410 (VKKRKEYDEK…PPSSFQDGQA (328 aa)). Composition is skewed to basic and acidic residues over residues 87 to 97 (KEYDEKKKEQG) and 114 to 126 (LTGE…EDSV). Residues 148-168 (SSIGLAISSDGASSSSAALSS) are compositionally biased toward low complexity. Pro residues-rich tracts occupy residues 198–207 (PLPPLPPLPP), 216–227 (SPFPPPPPGPPP), and 235–253 (PPLP…PPPG). Composition is skewed to polar residues over residues 267-281 (SDFT…NITS), 300-312 (AESN…NANL), and 326-343 (QQHQ…TNFQ). Composition is skewed to pro residues over residues 346 to 369 (VHPP…PPHP) and 378 to 403 (PRPP…PPPS).

In seedlings, mostly expressed in the shoot apical meristem (SAM) and root tip.

Its subcellular location is the nucleus. In terms of biological role, involved in the regulation of flowering time in both long and short days. The chain is Protein EARLY FLOWERING 5 from Arabidopsis thaliana (Mouse-ear cress).